Reading from the N-terminus, the 407-residue chain is Probable cysteine protease atg4 (407 aa).

Catalysis depends on Cys136, which acts as the Nucleophile. Catalysis depends on residues Asp310 and His312.

The protein belongs to the peptidase C54 family.

The protein localises to the cytoplasm. It localises to the nucleus. The protein resides in the preautophagosomal structure. The enzyme catalyses [protein]-C-terminal L-amino acid-glycyl-phosphatidylethanolamide + H2O = [protein]-C-terminal L-amino acid-glycine + a 1,2-diacyl-sn-glycero-3-phosphoethanolamine. Its function is as follows. Cysteine protease that is required for autophagy. Plays a key role in cytoplasm to vacuole transport (Cvt) and autophagy by mediating both proteolytic activation and delipidation of atg8. The protease activity is required for proteolytic activation of atg8 by the cleavage of the C-terminal amino acid of atg8 to reveal a C-terminal glycine. Azg8 ubiquitin-like activity requires the exposure of the glycine at the C-terminus for its conjugation to phosphatidylethanolamine (PE) and its insertion to membranes, which is necessary for autophagy. The atg8-PE conjugate mediates tethering between adjacent membranes and stimulates membrane hemifusion, leading to expansion of the autophagosomal membrane during autophagy. In addition to the protease activity, also catalyzes deconjugation of PE-conjugated forms of atg8 during macroautophagy since atg8 delipidation is required to release the protein from membranes, which facilitates multiple events during macroautophagy, and especially for efficient autophagosome biogenesis, the assembly of atg99-containing tubulovesicular clusters into phagophores/autophagosomes, and for the disassembly of PAS-associated ATG components. Atg8 delipidation by atg4 also recycles atg8-PE generated on inappropriate membranes to maintain a reservoir of unlipidated atg8 that is required for autophagosome formation at the PAS. The polypeptide is Probable cysteine protease atg4 (Aspergillus oryzae (strain ATCC 42149 / RIB 40) (Yellow koji mold)).